The primary structure comprises 312 residues: tRNA-dihydrouridine(16) synthase (312 aa).

Residues 7-9 (PME) and Gln-68 each bind FMN. Cys-98 functions as the Proton donor in the catalytic mechanism. Residues Lys-139, 200–202 (NGE), and 224–225 (GR) each bind FMN.

It belongs to the Dus family. DusC subfamily. Requires FMN as cofactor.

The enzyme catalyses 5,6-dihydrouridine(16) in tRNA + NADP(+) = uridine(16) in tRNA + NADPH + H(+). It catalyses the reaction 5,6-dihydrouridine(16) in tRNA + NAD(+) = uridine(16) in tRNA + NADH + H(+). Its function is as follows. Catalyzes the synthesis of 5,6-dihydrouridine (D), a modified base found in the D-loop of most tRNAs, via the reduction of the C5-C6 double bond in target uridines. Specifically modifies U16 in tRNAs. The chain is tRNA-dihydrouridine(16) synthase from Yersinia pestis.